Reading from the N-terminus, the 542-residue chain is Chaperonin GroEL 2 (542 aa).

Residues 30-33 (TLGP), lysine 51, 87-91 (DGTTT), glycine 415, and aspartate 496 contribute to the ATP site.

The protein belongs to the chaperonin (HSP60) family. As to quaternary structure, forms a cylinder of 14 subunits composed of two heptameric rings stacked back-to-back. Interacts with the co-chaperonin GroES.

Its subcellular location is the cytoplasm. It catalyses the reaction ATP + H2O + a folded polypeptide = ADP + phosphate + an unfolded polypeptide.. In terms of biological role, together with its co-chaperonin GroES, plays an essential role in assisting protein folding. The GroEL-GroES system forms a nano-cage that allows encapsulation of the non-native substrate proteins and provides a physical environment optimized to promote and accelerate protein folding. The protein is Chaperonin GroEL 2 of Sinorhizobium fredii (strain NBRC 101917 / NGR234).